Reading from the N-terminus, the 163-residue chain is MASITQAAKSLLLKEFASAFALSMRQFFAPKATLNYPHEKGPVSPRFRGEHALRRYPNGEERCIACKLCEAICPAQAITIEAGPRRNDGTRRTVRYDIDMVKCIYCGFCQEACPVDAIVEGPNFEFATETREELYYDKDKLLANGDRWEREIARNIAMDAPYR.

4Fe-4S ferredoxin-type domains lie at 53 to 83 and 94 to 123; these read LRRY…IEAG and VRYD…EGPN. [4Fe-4S] cluster-binding residues include C63, C66, C69, C73, C103, C106, C109, and C113.

It belongs to the complex I 23 kDa subunit family. As to quaternary structure, NDH-1 is composed of 14 different subunits. Subunits NuoA, H, J, K, L, M, N constitute the membrane sector of the complex. The cofactor is [4Fe-4S] cluster.

The protein resides in the cell inner membrane. The catalysed reaction is a quinone + NADH + 5 H(+)(in) = a quinol + NAD(+) + 4 H(+)(out). NDH-1 shuttles electrons from NADH, via FMN and iron-sulfur (Fe-S) centers, to quinones in the respiratory chain. The immediate electron acceptor for the enzyme in this species is believed to be ubiquinone. Couples the redox reaction to proton translocation (for every two electrons transferred, four hydrogen ions are translocated across the cytoplasmic membrane), and thus conserves the redox energy in a proton gradient. This chain is NADH-quinone oxidoreductase subunit I, found in Brucella canis (strain ATCC 23365 / NCTC 10854 / RM-666).